Reading from the N-terminus, the 770-residue chain is MEPREAAGKETMGSKKKNLTFLRSRLYMLERRKTDTVVDSSVSGDHSGSLRRSQSDRTEYNQKLQEKMTPQAECSSAETPTPEDEQQVGRMMAKRAKIIRELIQTERDYLTDLELCLREVVQPLRSKQIDRLDVEGLFSNIESVHQISAKLLSLLEEATTDVEPAMQVIGEVFLQIKGPLEDIYKIYCYHHDEAHSVLESYEKEEELKQHLSHCLQSLKNIYLQEGKPNLLDMGSLMIKPIQRVMKYPLLLCELRNSTPPSHPDYRALGEAFAAVKDINVNINELKRRKDLVLKYKKNEEEESLKDKLSKLNIHSISKKSKRVTNHLKILTRGESQVKDNTFNREEKLFRSLEKTVRLCVKNISSCLQHIEEATPFTLQSGAELREISYQDGEKNGTEPQDQASKPYQDFAARSQRLILNPLSALLSLFPGPQKLIQKRYDKLLDYNSSLPRSATTESDLAKREYEALNAQLVEELQAFNQAAKTILLNCLCSFVTLLRDLMQVALQAYSTVKTVPLPVLGISEIQSRVLEEVHSLTFVKENSATFIERKLSFEKKKPAQILPEVPHQTDAHRSKLLSTYGAEELYRAKRKCNATQEHDINLLEGELVAVLEQKDPLGSTSRWFVDTGCVKGYVYSSFLKPHNPGKGQKVDADNRFCDDDFENISLFVSCRPAGDRVSISDSSSSLSGSCGKFETNGADADNFQEVDEQIFYAVHAFQARSDHELSLQEYQRVHILRFCDLSGNKEWWLAEAQGQKGYVPANYLGKMTYA.

The interval 33-88 (KTDTVVDSSVSGDHSGSLRRSQSDRTEYNQKLQEKMTPQAECSSAETPTPEDEQQV) is disordered. The residue at position 34 (threonine 34) is a Phosphothreonine. The segment covering 37–47 (VVDSSVSGDHS) has biased composition (low complexity). The span at 53 to 66 (SQSDRTEYNQKLQE) shows a compositional bias: basic and acidic residues. The 192-residue stretch at 94–285 (KRAKIIRELI…KDINVNINEL (192 aa)) folds into the DH domain. One can recognise a BAR domain in the interval 327 to 542 (LKILTRGESQ…VHSLTFVKEN (216 aa)). 2 consecutive SH3 domains span residues 581–644 (GAEE…PHNP) and 706–769 (VDEQ…KMTY).

Its function is as follows. May act as a guanine-nucleotide releasing factor. This chain is Rho guanine nucleotide exchange factor 38 (Arhgef38), found in Mus musculus (Mouse).